The sequence spans 778 residues: Probable protein kinase DDB_G0291133 (778 aa).

The interval 129-162 is disordered; it reads LSINNNNNNNNNNGGYKIPSSVNKNSNNYNSNSN. One can recognise a Protein kinase domain in the interval 177–462; sequence FDVVCKLGSG…LDQILLNENI (286 aa). ATP-binding positions include 183–191 and lysine 206; that span reads LGSGSFSDV. Residue aspartate 303 is the Proton acceptor of the active site. The Mg(2+) site is built by asparagine 308 and aspartate 321. 3 disordered regions span residues 478 to 509, 562 to 697, and 757 to 778; these read NIEN…DDNN, HFVR…GFYG, and SHPQ…QETN. Acidic residues predominate over residues 578 to 590; it reads SDEEEDDDDDDDS. Over residues 599–651 the composition is skewed to low complexity; the sequence is SLNNLNNSSSNIGISESNSNNSFSSILEENNESSSSSPLPSLSFSRRLSTSSL. Residues 652–670 show a composition bias toward polar residues; it reads VTTISPKPNFNTSGNKLFS. Residues 671–693 are compositionally biased toward low complexity; that stretch reads NENNNSNNNNNNNNNNQNNNNNN. Positions 757 to 766 are enriched in basic and acidic residues; sequence SHPQESDKMS.

Belongs to the protein kinase superfamily. Ser/Thr protein kinase family. WEE1 subfamily.

The enzyme catalyses L-seryl-[protein] + ATP = O-phospho-L-seryl-[protein] + ADP + H(+). The catalysed reaction is L-threonyl-[protein] + ATP = O-phospho-L-threonyl-[protein] + ADP + H(+). The protein is Probable protein kinase DDB_G0291133 of Dictyostelium discoideum (Social amoeba).